Consider the following 838-residue polypeptide: Gamma-tubulin complex component 3 (838 aa).

The tract at residues 1-199 (MEDDDQQKAA…VRDVLYASQG (199 aa)) is mediates interactions with GIP1 and GIP2. The segment at 200–256 (IDGKYVKFNSEIDGYAVQESVKVPRATRIMVRMLSELGWLFRKVKTFITESMDRFPA) is triggers nucleus envelope localization.

It belongs to the TUBGCP family. Part of the gamma-tubulin complex. Gamma-tubulin complex is composed of gamma-tubulin and GCP proteins. Interacts directly with GCP2, GIP1 and GIP2.

Its subcellular location is the cytoplasm. It localises to the cytoskeleton. It is found in the microtubule organizing center. The protein resides in the nucleus envelope. The protein localises to the cell cortex. Its subcellular location is the spindle. Functionally, gamma-tubulin complex is necessary for microtubule nucleation at the microtubule organizing centers (MTOCs). Required for the positioning of the gamma-tubulin-containing complex on pre-existing microtubules and for the proper organization of cortical arrays. In terms of biological role, gamma-tubulin complex is essential for the control of microtubular network remodeling in the course of initiation and development of giant-feeding cells, and for the successful reproduction of nematodes (e.g. Meloidogyne spp.) in their plant hosts. The sequence is that of Gamma-tubulin complex component 3 (GCP3) from Arabidopsis thaliana (Mouse-ear cress).